Consider the following 748-residue polypeptide: Adenosylcobalamin-dependent ribonucleoside-triphosphate reductase (748 aa).

Cysteines 123 and 426 form a disulfide. The tract at residues S151 to M162 is effector region-1. The interval T172 to V320 is effector region-2. Residues C415 and E417 contribute to the active site. Positions F572–V633 are adenosylcobalamin-binding-1. Residues F692 to E733 form an adenosylcobalamin-binding-2 region.

Belongs to the class II ribonucleoside-triphosphate reductase family. As to quaternary structure, monomer. Adenosylcob(III)alamin is required as a cofactor.

The enzyme catalyses a 2'-deoxyribonucleoside 5'-triphosphate + [thioredoxin]-disulfide + H2O = a ribonucleoside 5'-triphosphate + [thioredoxin]-dithiol. Its activity is regulated as follows. Allosterically regulated by ATP and dNTP. In Lacticaseibacillus paracasei (strain ATCC 334 / BCRC 17002 / CCUG 31169 / CIP 107868 / KCTC 3260 / NRRL B-441) (Lactobacillus paracasei), this protein is Adenosylcobalamin-dependent ribonucleoside-triphosphate reductase (rtpR).